The following is a 189-amino-acid chain: Mediator of RNA polymerase II transcription subunit 30 (189 aa).

Residues 138 to 178 (SPESEDEIEKLEEQALSLRMEIAKKNVHVKELIDKLRELIA) are a coiled coil.

This sequence belongs to the plant Mediator complex subunit 30 family. As to quaternary structure, component of the Mediator complex.

It localises to the nucleus. Component of the Mediator complex, a coactivator involved in the regulated transcription of nearly all RNA polymerase II-dependent genes. Mediator functions as a bridge to convey information from gene-specific regulatory proteins to the basal RNA polymerase II transcription machinery. The Mediator complex, having a compact conformation in its free form, is recruited to promoters by direct interactions with regulatory proteins and serves for the assembly of a functional preinitiation complex with RNA polymerase II and the general transcription factors. The sequence is that of Mediator of RNA polymerase II transcription subunit 30 (MED30) from Arabidopsis thaliana (Mouse-ear cress).